The primary structure comprises 118 residues: Protein TusC (118 aa).

The protein belongs to the DsrF/TusC family. As to quaternary structure, heterohexamer, formed by a dimer of trimers. The hexameric TusBCD complex contains 2 copies each of TusB, TusC and TusD. The TusBCD complex interacts with TusE.

It localises to the cytoplasm. In terms of biological role, part of a sulfur-relay system required for 2-thiolation of 5-methylaminomethyl-2-thiouridine (mnm(5)s(2)U) at tRNA wobble positions. This Salmonella typhi protein is Protein TusC.